We begin with the raw amino-acid sequence, 592 residues long: Prospero homeobox protein 2 (592 aa).

5 disordered regions span residues 20 to 56 (EACT…PEWF), 85 to 129 (GNAQ…RKGG), 155 to 218 (KPRD…LPSG), 308 to 336 (RLDS…PLTA), and 353 to 382 (RYNN…LRPW). Positions 95–106 (CPKKARERKRKQ) are enriched in basic residues. A compositionally biased stretch (basic and acidic residues) spans 201 to 211 (SGAEKHQESEK). The span at 314–331 (YPIPPRMTPKPCQDPPAN) shows a compositional bias: pro residues. The span at 360 to 377 (SSSPPQDSSSQRHPSSEP) shows a compositional bias: low complexity. A Prospero-type homeo domain is found at 437-495 (QEGLNPGHLKKAKLMFFFTRYPSSNLLKVYFPDVQFNRCITSQMIKWFSNFREFYYIQM). A homeo-Prospero region spans residues 437–592 (QEGLNPGHLK…EIFKSSSYPQ (156 aa)). One can recognise a Prospero domain in the interval 496–592 (EKSARQAISD…EIFKSSSYPQ (97 aa)).

It belongs to the Prospero homeodomain family.

It localises to the nucleus. Its function is as follows. Transcription regulator. Does not seem to be essential for embryonic development and postnatal survival. The polypeptide is Prospero homeobox protein 2 (PROX2) (Homo sapiens (Human)).